A 959-amino-acid polypeptide reads, in one-letter code: Translation initiation factor IF-2 (959 aa).

The tract at residues serine 33–leucine 373 is disordered. Over residues isoleucine 46–alanine 60 the composition is skewed to polar residues. The segment covering alanine 63–alanine 73 has biased composition (basic and acidic residues). A compositionally biased stretch (low complexity) spans alanine 76–serine 100. Basic and acidic residues-rich tracts occupy residues phenylalanine 112–alanine 125, serine 134–glutamine 143, and asparagine 179–arginine 192. Polar residues predominate over residues serine 193–alanine 211. Basic and acidic residues-rich tracts occupy residues alanine 234–alanine 258 and glutamine 266–proline 276. The segment covering alanine 277–alanine 287 has biased composition (low complexity). The segment covering asparagine 306–lysine 323 has biased composition (basic and acidic residues). A compositionally biased stretch (low complexity) spans serine 328–asparagine 346. Positions lysine 347–asparagine 357 are enriched in basic residues. A tr-type G domain is found at glutamate 460–lysine 629. Positions glycine 469–threonine 476 are G1. Glycine 469–threonine 476 is a binding site for GTP. The interval glycine 494–histidine 498 is G2. A G3 region spans residues aspartate 515–glycine 518. Residues aspartate 515–histidine 519 and asparagine 569–aspartate 572 contribute to the GTP site. Residues asparagine 569–aspartate 572 form a G4 region. A G5 region spans residues serine 605 to lysine 607.

It belongs to the TRAFAC class translation factor GTPase superfamily. Classic translation factor GTPase family. IF-2 subfamily.

It localises to the cytoplasm. In terms of biological role, one of the essential components for the initiation of protein synthesis. Protects formylmethionyl-tRNA from spontaneous hydrolysis and promotes its binding to the 30S ribosomal subunits. Also involved in the hydrolysis of GTP during the formation of the 70S ribosomal complex. In Streptococcus equi subsp. zooepidemicus (strain H70), this protein is Translation initiation factor IF-2.